The primary structure comprises 430 residues: MTATLAVIGAGPKAVAVAAKAAELRNMGVDAPDVVVVERAGVGANWTAAGGWTDGQHRLGTSPEKDIGFPYRSSLVPRRNAELDDRMTRHSWQAYLVATSQFAEWIDRGRPAPNHHRWAAYLRWVADAIGMNVVHGEVERISIGGRGWELHTPESTVAADAVMITGPGQAERTLLPGHPRVMSIADFWRRTAGHELIVAERVAMIGGGETAASMLNELFRHRVSTITVISPQVTLFTRGEGFFENTLFSDPTGWTSLTLAERRDAMFRTDRGVFSARVQEALLADDRIRHLRGRVAHAVPRDGRIRLTLHTDRAGERVETVHGFDLVIDGQGADALWFLPLLGQDARDLLELGLGGPLTGELLQESIGHDLAVGGVTPKLFLPGLAGLNQGPGFPNLSCLGLMSDRILGADLGANAAMTNRRSIEHQPIR.

Positions 1-21 are cleaved as a signal peptide; it reads MTATLAVIGAGPKAVAVAAKA.

It belongs to the lysine N(6)-hydroxylase/L-ornithine N(5)-oxygenase family. FAD is required as a cofactor.

The catalysed reaction is L-lysine + NADPH + O2 = N(6)-hydroxy-L-lysine + NADP(+) + H2O. The protein operates within siderophore biosynthesis; mycobactin biosynthesis. Flavoprotein monooxygenase required for N-hydroxylation of the two acylated lysine residues during mycobactin assembly, thus producing the hydroxamate groups necessary for iron sequestration. Is also able, but less efficiently, to hydroxylate L-lysine (non acylated) in vitro. The polypeptide is L-lysine N6-monooxygenase MbtG (mbtG) (Mycobacterium sp. (strain MCS)).